The chain runs to 124 residues: Small ribosomal subunit protein uS12 (124 aa).

Asp89 is subject to 3-methylthioaspartic acid. Positions 104–124 (TAGVENRKQSRSKYGAKRPKK) are disordered. A compositionally biased stretch (basic residues) spans 112 to 124 (QSRSKYGAKRPKK).

The protein belongs to the universal ribosomal protein uS12 family. As to quaternary structure, part of the 30S ribosomal subunit. Contacts proteins S8 and S17. May interact with IF1 in the 30S initiation complex.

In terms of biological role, with S4 and S5 plays an important role in translational accuracy. Functionally, interacts with and stabilizes bases of the 16S rRNA that are involved in tRNA selection in the A site and with the mRNA backbone. Located at the interface of the 30S and 50S subunits, it traverses the body of the 30S subunit contacting proteins on the other side and probably holding the rRNA structure together. The combined cluster of proteins S8, S12 and S17 appears to hold together the shoulder and platform of the 30S subunit. In Pseudothermotoga lettingae (strain ATCC BAA-301 / DSM 14385 / NBRC 107922 / TMO) (Thermotoga lettingae), this protein is Small ribosomal subunit protein uS12.